A 294-amino-acid polypeptide reads, in one-letter code: Beta-lactamase (294 aa).

Residues 1–27 (MFKKRGRQTVLIAAVLAFFTASSPLLA) form the signal peptide. Ser76 serves as the catalytic Acyl-ester intermediate. Glu174 (proton acceptor) is an active-site residue. Position 240–242 (240–242 (KTG)) interacts with substrate.

Belongs to the class-A beta-lactamase family.

It carries out the reaction a beta-lactam + H2O = a substituted beta-amino acid. The polypeptide is Beta-lactamase (Citrobacter koseri (Citrobacter diversus)).